Reading from the N-terminus, the 105-residue chain is Flagellar transcriptional regulator FlhD (105 aa).

This sequence belongs to the FlhD family. In terms of assembly, homodimer; disulfide-linked. Forms a heterohexamer composed of two FlhC and four FlhD subunits. Each FlhC binds a FlhD dimer, forming a heterotrimer, and a hexamer assembles by dimerization of two heterotrimers.

The protein localises to the cytoplasm. In terms of biological role, functions in complex with FlhC as a master transcriptional regulator that regulates transcription of several flagellar and non-flagellar operons by binding to their promoter region. Activates expression of class 2 flagellar genes, including fliA, which is a flagellum-specific sigma factor that turns on the class 3 genes. Also regulates genes whose products function in a variety of physiological pathways. In Ralstonia nicotianae (strain ATCC BAA-1114 / GMI1000) (Ralstonia solanacearum), this protein is Flagellar transcriptional regulator FlhD.